A 519-amino-acid chain; its full sequence is T-complex protein 11-like protein 2 (519 aa).

A disordered region spans residues 1-57 (MPFNGEKQCVSEDQPSDSDSSRFSESMASLSDYECSRQSFTSDSSSKSSSPASTSPP). S16 carries the phosphoserine modification. Composition is skewed to low complexity over residues 17 to 29 (DSDS…SMAS) and 36 to 55 (SRQS…ASTS).

This sequence belongs to the TCP11 family. In terms of assembly, interacts with FMNL2; this interaction promotes muscle-derived satellite cell (MDSC) migration and differentiation.

The protein resides in the cytoplasm. Its subcellular location is the cytoskeleton. Its function is as follows. Promotes the migration of muscle-derived satellite cells (MDSCs) during differentiation throught interaction with FMNL2 and therefore may participate in microfilament assembly. The polypeptide is T-complex protein 11-like protein 2 (Bos taurus (Bovine)).